A 131-amino-acid chain; its full sequence is S-adenosylmethionine decarboxylase proenzyme (131 aa).

The Schiff-base intermediate with substrate; via pyruvic acid role is filled by Ser64. Ser64 is subject to Pyruvic acid (Ser); by autocatalysis. Catalysis depends on His69, which acts as the Proton acceptor; for processing activity. Cys84 acts as the Proton donor; for catalytic activity in catalysis.

The protein belongs to the prokaryotic AdoMetDC family. Type 1 subfamily. In terms of assembly, heterotetramer of two alpha and two beta chains arranged as a dimer of alpha/beta heterodimers. The cofactor is pyruvate. Is synthesized initially as an inactive proenzyme. Formation of the active enzyme involves a self-maturation process in which the active site pyruvoyl group is generated from an internal serine residue via an autocatalytic post-translational modification. Two non-identical subunits are generated from the proenzyme in this reaction, and the pyruvate is formed at the N-terminus of the alpha chain, which is derived from the carboxyl end of the proenzyme. The post-translation cleavage follows an unusual pathway, termed non-hydrolytic serinolysis, in which the side chain hydroxyl group of the serine supplies its oxygen atom to form the C-terminus of the beta chain, while the remainder of the serine residue undergoes an oxidative deamination to produce ammonia and the pyruvoyl group blocking the N-terminus of the alpha chain.

It carries out the reaction S-adenosyl-L-methionine + H(+) = S-adenosyl 3-(methylsulfanyl)propylamine + CO2. The protein operates within amine and polyamine biosynthesis; S-adenosylmethioninamine biosynthesis; S-adenosylmethioninamine from S-adenosyl-L-methionine: step 1/1. Catalyzes the decarboxylation of S-adenosylmethionine to S-adenosylmethioninamine (dcAdoMet), the propylamine donor required for the synthesis of the polyamines spermine and spermidine from the diamine putrescine. In Thermoplasma acidophilum (strain ATCC 25905 / DSM 1728 / JCM 9062 / NBRC 15155 / AMRC-C165), this protein is S-adenosylmethionine decarboxylase proenzyme.